Consider the following 149-residue polypeptide: Transcriptional repressor NrdR (149 aa).

A zinc finger spans residues 3 to 34 (CPFCSATDTKVIDSRLVADGHQVRRRRECTEC). In terms of domain architecture, ATP-cone spans 49–139 (PRVIKRDGTR…VYRAFEDVSQ (91 aa)).

It belongs to the NrdR family. Zn(2+) is required as a cofactor.

In terms of biological role, negatively regulates transcription of bacterial ribonucleotide reductase nrd genes and operons by binding to NrdR-boxes. In Shewanella frigidimarina (strain NCIMB 400), this protein is Transcriptional repressor NrdR.